We begin with the raw amino-acid sequence, 304 residues long: MTRQMILAVGQQGPIARAETREQVVVRLLDMLTKAASRGANFIVFPELALTTFFPRWHFTDEAELDSFYETEMPGPVVRPLFEKAAELGIGFNLGYAELVVEGGVKRRFNTSILVDKSGKIVGKYRKIHLPGHKEYEAYRPFQHLEKRYFEPGDLGFPVYDVDAAKMGMFICNDRRWPEAWRVMGLRGAEIICGGYNTPTHNPPVPQHDHLTSFHHLLSMQAGSYQNGAWSAAAGKVGMEENCMLLGHSCIVAPTGEIVALTTTLEDEVITAAVDLDRCRELREHIFNFKQHRQPQHYGLIAEL.

One can recognise a CN hydrolase domain in the interval 5-276 (MILAVGQQGP…DEVITAAVDL (272 aa)). Catalysis depends on residues E47, K127, and C172.

The catalysed reaction is an N-carbamoyl-D-amino acid + H2O + 2 H(+) = a D-alpha-amino acid + NH4(+) + CO2. Its function is as follows. The enzyme catalyzes the hydrolysis of N-carbamoyl-D-amino acids to the corresponding which are useful intermediates in the preparation of beta-lactam antibiotics. Industrial production of beta-lactam antibiotics is now being developed using this enzyme. This chain is N-carbamoyl-D-amino acid hydrolase, found in Agrobacterium sp. (strain KNK712).